Reading from the N-terminus, the 491-residue chain is Protein DETOXIFICATION 56 (491 aa).

12 helical membrane passes run 39 to 59 (LPLV…SVFL), 72 to 92 (LGFS…SAAM), 111 to 131 (TLFM…FLWL), 154 to 174 (LLYL…KAYL), 181 to 201 (LPIM…NIVL), 212 to 232 (MAVW…VIVV), 261 to 281 (GPCC…VLLT), 291 to 311 (VSIL…MLSL), 336 to 356 (YTTL…MIAF), 379 to 399 (MLIM…GEIV), 409 to 429 (MYAN…TLAF), and 438 to 458 (FLIG…IFIA).

It belongs to the multi antimicrobial extrusion (MATE) (TC 2.A.66.1) family. In terms of assembly, interacts with BCA4 and HT1. As to expression, preferentially expressed in guard cells.

The protein localises to the cell membrane. Could function as a HCO(3)(-) -sensing component in the CO(2) signaling pathway in guard cells. Acts as an upstream repressor of HT1. Plays a role in stomatal response to CO(2). The sequence is that of Protein DETOXIFICATION 56 from Arabidopsis thaliana (Mouse-ear cress).